The sequence spans 217 residues: Adenylate kinase (217 aa).

10 to 15 (GAGKGT) lines the ATP pocket. Positions 30-59 (STGDIFRSNIKNGTELGRKAKEYIDKGLLV) are NMP. Residues T31, R36, 57-59 (LLV), 85-88 (GFPR), and Q92 contribute to the AMP site. Residues 126 to 163 (GRRVCSKCGMSYHIVYNQPKVENICDSCNGELIQRDDD) form an LID region. An ATP-binding site is contributed by R127. The Zn(2+) site is built by C130 and C133. 136 to 137 (SY) is an ATP binding site. Zn(2+) is bound by residues C150 and C153. 2 residues coordinate AMP: R160 and R171. E199 lines the ATP pocket.

Belongs to the adenylate kinase family. In terms of assembly, monomer.

It localises to the cytoplasm. It carries out the reaction AMP + ATP = 2 ADP. The protein operates within purine metabolism; AMP biosynthesis via salvage pathway; AMP from ADP: step 1/1. Catalyzes the reversible transfer of the terminal phosphate group between ATP and AMP. Plays an important role in cellular energy homeostasis and in adenine nucleotide metabolism. The chain is Adenylate kinase from Acetivibrio thermocellus (strain ATCC 27405 / DSM 1237 / JCM 9322 / NBRC 103400 / NCIMB 10682 / NRRL B-4536 / VPI 7372) (Clostridium thermocellum).